The following is a 99-amino-acid chain: Aspartyl/glutamyl-tRNA(Asn/Gln) amidotransferase subunit C (99 aa).

It belongs to the GatC family. In terms of assembly, heterotrimer of A, B and C subunits.

It catalyses the reaction L-glutamyl-tRNA(Gln) + L-glutamine + ATP + H2O = L-glutaminyl-tRNA(Gln) + L-glutamate + ADP + phosphate + H(+). The enzyme catalyses L-aspartyl-tRNA(Asn) + L-glutamine + ATP + H2O = L-asparaginyl-tRNA(Asn) + L-glutamate + ADP + phosphate + 2 H(+). Its function is as follows. Allows the formation of correctly charged Asn-tRNA(Asn) or Gln-tRNA(Gln) through the transamidation of misacylated Asp-tRNA(Asn) or Glu-tRNA(Gln) in organisms which lack either or both of asparaginyl-tRNA or glutaminyl-tRNA synthetases. The reaction takes place in the presence of glutamine and ATP through an activated phospho-Asp-tRNA(Asn) or phospho-Glu-tRNA(Gln). In Macrococcus caseolyticus (strain JCSC5402) (Macrococcoides caseolyticum), this protein is Aspartyl/glutamyl-tRNA(Asn/Gln) amidotransferase subunit C.